Here is a 354-residue protein sequence, read N- to C-terminus: UPF0283 protein YcjF (354 aa).

Transmembrane regions (helical) follow at residues 71–91 (MVTVGIALFGVSVIAQSVQWV), 101–121 (IALGATTAGGLIVLAGVGSVV), and 214–234 (ESALMIAVSPLALVDMAFIAW).

This sequence belongs to the UPF0283 family.

Its subcellular location is the cell inner membrane. The chain is UPF0283 protein YcjF (ycjF) from Yersinia enterocolitica.